Consider the following 226-residue polypeptide: Leucyl/phenylalanyl-tRNA--protein transferase (226 aa).

Belongs to the L/F-transferase family.

It is found in the cytoplasm. The enzyme catalyses N-terminal L-lysyl-[protein] + L-leucyl-tRNA(Leu) = N-terminal L-leucyl-L-lysyl-[protein] + tRNA(Leu) + H(+). It catalyses the reaction N-terminal L-arginyl-[protein] + L-leucyl-tRNA(Leu) = N-terminal L-leucyl-L-arginyl-[protein] + tRNA(Leu) + H(+). It carries out the reaction L-phenylalanyl-tRNA(Phe) + an N-terminal L-alpha-aminoacyl-[protein] = an N-terminal L-phenylalanyl-L-alpha-aminoacyl-[protein] + tRNA(Phe). In terms of biological role, functions in the N-end rule pathway of protein degradation where it conjugates Leu, Phe and, less efficiently, Met from aminoacyl-tRNAs to the N-termini of proteins containing an N-terminal arginine or lysine. In Stutzerimonas stutzeri (strain A1501) (Pseudomonas stutzeri), this protein is Leucyl/phenylalanyl-tRNA--protein transferase.